A 387-amino-acid chain; its full sequence is Anhydro-N-acetylmuramic acid kinase (387 aa).

An ATP-binding site is contributed by 9–16 (GTSADGVD).

It belongs to the anhydro-N-acetylmuramic acid kinase family.

The catalysed reaction is 1,6-anhydro-N-acetyl-beta-muramate + ATP + H2O = N-acetyl-D-muramate 6-phosphate + ADP + H(+). Its pathway is amino-sugar metabolism; 1,6-anhydro-N-acetylmuramate degradation. It participates in cell wall biogenesis; peptidoglycan recycling. Functionally, catalyzes the specific phosphorylation of 1,6-anhydro-N-acetylmuramic acid (anhMurNAc) with the simultaneous cleavage of the 1,6-anhydro ring, generating MurNAc-6-P. Is required for the utilization of anhMurNAc either imported from the medium or derived from its own cell wall murein, and thus plays a role in cell wall recycling. This is Anhydro-N-acetylmuramic acid kinase from Synechococcus sp. (strain WH7803).